The sequence spans 117 residues: Minor capsid protein VP2 (117 aa).

It belongs to the lagovirus VP2 protein family. In terms of assembly, homooligomer. The portal-like structure consists in 12 copies of VP2. Interacts with capsid protein VP1.

It is found in the virion. The protein localises to the host cytoplasm. Functionally, minor structural protein that forms a portal-like structure at a unique three-fold axis of symmetry, following binding to the host receptor. The channel formed by VP2 may allow the delivery of the viral genome through the host endosomal membrane. In Oryctolagus cuniculus (Rabbit), this protein is Minor capsid protein VP2.